Reading from the N-terminus, the 643-residue chain is 1-deoxy-D-xylulose-5-phosphate synthase (643 aa).

Residues His-71 and 112-114 (SHA) contribute to the thiamine diphosphate site. Position 144 (Asp-144) interacts with Mg(2+). Thiamine diphosphate is bound by residues 145–146 (GA), Asn-173, Tyr-284, and Glu-365. Asn-173 serves as a coordination point for Mg(2+).

It belongs to the transketolase family. DXPS subfamily. Homodimer. The cofactor is Mg(2+). Thiamine diphosphate serves as cofactor.

The enzyme catalyses D-glyceraldehyde 3-phosphate + pyruvate + H(+) = 1-deoxy-D-xylulose 5-phosphate + CO2. Its pathway is metabolic intermediate biosynthesis; 1-deoxy-D-xylulose 5-phosphate biosynthesis; 1-deoxy-D-xylulose 5-phosphate from D-glyceraldehyde 3-phosphate and pyruvate: step 1/1. In terms of biological role, catalyzes the acyloin condensation reaction between C atoms 2 and 3 of pyruvate and glyceraldehyde 3-phosphate to yield 1-deoxy-D-xylulose-5-phosphate (DXP). This Mycobacterium leprae (strain Br4923) protein is 1-deoxy-D-xylulose-5-phosphate synthase.